A 376-amino-acid chain; its full sequence is C-type lectin domain family 4 member M (376 aa).

Over 1-49 (MSDSKEPRVQQLGLLEEDPTTSGIRLFPRDFQFQQIHGHKSSTGCLGHG) the chain is Cytoplasmic. The Endocytosis signal motif lies at 14–15 (LL). A helical; Signal-anchor for type II membrane protein transmembrane segment spans residues 50 to 70 (ALVLQLLSFTLLAGVLVAILV). The Extracellular portion of the chain corresponds to 71–376 (QVSKVPSSLS…KKPTVCFRDE (306 aa)). Asn92 carries N-linked (GlcNAc...) asparagine glycosylation. Tandem repeats lie at residues 108-130 (KLQE…PEKS), 131-153 (KLQE…PEKS), 154-176 (KLQE…PEKS), 177-199 (KLQE…PEKS), 200-222 (KLQE…PDQS), and 223-245 (KQQQ…CRHC). A 6 X approximate tandem repeats region spans residues 108-246 (KLQEIYQELT…AFERLCRHCP (139 aa)). 4 disulfides stabilise this stretch: Cys242–Cys372, Cys245–Cys256, Cys273–Cys366, and Cys345–Cys358. The C-type lectin domain occupies 251-367 (FFQGNCYFMS…CDVDNYWICK (117 aa)). Residues Glu336, Asn338, Ser340, Glu343, Asn354, and Asp355 each coordinate Ca(2+). N-linked (GlcNAc...) asparagine glycosylation is present at Asn338.

In terms of assembly, homotetramer.

It is found in the membrane. Probable pathogen-recognition receptor involved in peripheral immune surveillance in liver. May mediate the endocytosis of pathogens which are subsequently degraded in lysosomal compartments. Probably recognizes in a calcium-dependent manner high mannose N-linked oligosaccharides in a variety of pathogen antigens. Is a receptor for ICAM3, probably by binding to mannose-like carbohydrates. This chain is C-type lectin domain family 4 member M (CLEC4M), found in Gorilla gorilla gorilla (Western lowland gorilla).